A 798-amino-acid polypeptide reads, in one-letter code: Peroxisome proliferator-activated receptor gamma coactivator 1-alpha (798 aa).

Position 79 is an N6-acetyllysine (Lys79). Residues 100–140 (PVDEDGLPSFDALTDGDVTTDNEASPSSMPDGTPPPQEAEE) form a disordered region. Residues 116 to 129 (DVTTDNEASPSSMP) show a composition bias toward polar residues. The short motif at 144 to 148 (LKKLL) is the LXXLL motif element. Lys146 carries the N6-acetyllysine modification. At Thr178 the chain carries Phosphothreonine; by AMPK. Lys184 is subject to N6-acetyllysine. Residues 213–277 (YLTTNDDPPH…NDPKGSPFEN (65 aa)) are disordered. Over residues 219-237 (DPPHTKPTENRNSSRDKCT) the composition is skewed to basic and acidic residues. N6-acetyllysine is present on residues Lys254, Lys271, Lys278, and Lys321. The disordered stretch occupies residues 290–351 (GTAGLTPPTT…NNSTKKGPEQ (62 aa)). An interaction with PPARG region spans residues 293-339 (GLTPPTTPPHKANQDNPFRASPKLKSSCKTVVPPPSKKPRYSESSGT). The segment covering 334 to 346 (SESSGTQGNNSTK) has biased composition (polar residues). 4 positions are modified to N6-acetyllysine: Lys347, Lys413, Lys442, and Lys451. A mediates interaction with RNF34 region spans residues 350–798 (EQSELYAQLS…LKEAQRSLRR (449 aa)). Ser539 bears the Phosphoserine; by AMPK mark. Disordered stretches follow at residues 542 to 599 (SFNS…SSRS), 613 to 639 (HRNS…SYEE), and 650 to 669 (YRRE…ERQR). Positions 563-578 (QRMRSRSRSFSRHRSC) are enriched in basic residues. Low complexity predominate over residues 579–599 (SRSPYSRSRSRSPGSRSSSRS). Residues 622-631 (SRSRSPYSRR) are compositionally biased toward basic residues. One can recognise an RRM domain in the interval 677–753 (RVIYVGKIRP…TDFELYFCGR (77 aa)). Lys758 and Lys779 each carry N6-acetyllysine.

As to quaternary structure, homooligomer. Interacts with MYBBP1A; inhibits MYBBP1A transcriptional activation. Interacts with PRDM16, LPIN1 and PML. Interacts (via LXXLL motif) with RORA and RORC (via AF-2 motif); activates RORA and RORC transcriptional activation. Interacts with LRPPRC. Interacts with FOXO1. Interacts with NR5A2. Post-translationally, phosphorylation by AMPK in skeletal muscle increases activation of its own promoter. Phosphorylated by CLK2. Heavily acetylated by KAT2A/GCN5 under conditions of high nutrients, leading to inactivation of PPARGC1A. Deacetylated by SIRT1 in low nutrients/high NAD conditions, leading to its activation. In terms of processing, ubiquitinated. Ubiquitination by RNF34 induces proteasomal degradation. As to expression, heart, skeletal muscle, liver and kidney. Expressed at lower levels in brain and pancreas and at very low levels in the intestine and white adipose tissue. In skeletal muscle, levels were lower in obese than in lean subjects and fasting induced a 2-fold increase in levels in the skeletal muscle in obese subjects.

The protein resides in the nucleus. Its subcellular location is the PML body. The protein localises to the cytoplasm. Functionally, transcriptional coactivator for steroid receptors and nuclear receptors. Greatly increases the transcriptional activity of PPARG and thyroid hormone receptor on the uncoupling protein promoter. Can regulate key mitochondrial genes that contribute to the program of adaptive thermogenesis. Plays an essential role in metabolic reprogramming in response to dietary availability through coordination of the expression of a wide array of genes involved in glucose and fatty acid metabolism. Acts as a key regulator of gluconeogenesis: stimulates hepatic gluconeogenesis by increasing the expression of gluconeogenic enzymes, and acting together with FOXO1 to promote the fasting gluconeogenic program. Induces the expression of PERM1 in the skeletal muscle in an ESRRA-dependent manner. Also involved in the integration of the circadian rhythms and energy metabolism. Required for oscillatory expression of clock genes, such as BMAL1 and NR1D1, through the coactivation of RORA and RORC, and metabolic genes, such as PDK4 and PEPCK. In Homo sapiens (Human), this protein is Peroxisome proliferator-activated receptor gamma coactivator 1-alpha (PPARGC1A).